The primary structure comprises 320 residues: Glyoxylate/hydroxypyruvate reductase B (320 aa).

Residues Arg233 and Glu262 contribute to the active site. His281 functions as the Proton donor in the catalytic mechanism.

Belongs to the D-isomer specific 2-hydroxyacid dehydrogenase family. GhrB subfamily. In terms of assembly, homodimer.

It localises to the cytoplasm. It catalyses the reaction glycolate + NADP(+) = glyoxylate + NADPH + H(+). It carries out the reaction (R)-glycerate + NAD(+) = 3-hydroxypyruvate + NADH + H(+). The enzyme catalyses (R)-glycerate + NADP(+) = 3-hydroxypyruvate + NADPH + H(+). In terms of biological role, catalyzes the NADPH-dependent reduction of glyoxylate and hydroxypyruvate into glycolate and glycerate, respectively. In Pectobacterium carotovorum subsp. carotovorum (strain PC1), this protein is Glyoxylate/hydroxypyruvate reductase B.